A 1186-amino-acid polypeptide reads, in one-letter code: Pumilio homolog 1 (1186 aa).

S2 carries the post-translational modification N-acetylserine. S19 is subject to Phosphoserine. The tract at residues L22–G73 is disordered. The segment covering Q45–A58 has biased composition (low complexity). Residues S75, S98, and S106 each carry the phosphoserine modification. T112 bears the Phosphothreonine mark. A phosphoserine mark is found at S124, S159, S197, S209, and S229. Residues S233 to E272 form a disordered region. Residues N250 to E272 are compositionally biased toward basic and acidic residues. S305 is modified (phosphoserine). Over residues T485–Q502 the composition is skewed to low complexity. Disordered regions lie at residues T485–T524 and A613–N648. Residues R511 to T524 are compositionally biased toward polar residues. A Phosphothreonine modification is found at T514. Residues Q626 to N639 show a composition bias toward low complexity. Residues S709 and S714 each carry the phosphoserine modification. A disordered region spans residues G742–N773. Positions L763–N773 are enriched in low complexity. The residue at position 796 (R796) is an Omega-N-methylarginine. Phosphoserine is present on residues S806 and S822. Residues G828–Y1168 enclose the PUM-HD domain. Pumilio repeat units lie at residues E848–N883, E884–E919, R920–R955, E956–D991, A992–E1027, E1028–A1063, E1064–D1099, and T1103–H1142. Residues S863–Q867 form an adenine-nucleotide binding in RNA target region. Positions N899 to Q903 are uracil-nucleotide binding in RNA target. The interval C935 to Q939 is adenine-nucleotide binding in RNA target. Residues N971–Q975 are non-specific-nucleotide binding in RNA target. An adenine-nucleotide binding in RNA target region spans residues C1007–Q1011. Residues N1043–Q1047 are uracil-nucleotide binding in RNA target. The segment at S1079–E1083 is guanine-nucleotide binding in RNA target. Residues N1122 to Q1126 are uracil-nucleotide binding in RNA target.

Recruits the CCR4-POP2-NOT deadenylase leading to translational inhibition and mRNA degradation. In case of viral infection, interacts with DHX58. Interacts with TRIM71 (via NHL repeats) in an RNA-dependent manner. Post-translationally, phosphorylation at Ser-714 promotes RNA-binding activity. Following growth factor stimulation phosphorylated at Ser-714, promoting binding to the 3'-UTR of CDKN1B/p27 mRNA. In terms of tissue distribution, expressed in brain, heart, kidney, muscle, intestine and stomach. Not expressed in cerebellum, corpus callosum, caudate nucleus, hippocampus, medulla oblongata and putamen. Expressed in all fetal tissues tested.

The protein resides in the cytoplasm. It is found in the P-body. Its subcellular location is the cytoplasmic granule. Sequence-specific RNA-binding protein that acts as a post-transcriptional repressor by binding the 3'-UTR of mRNA targets. Binds to an RNA consensus sequence, the Pumilio Response Element (PRE), 5'-UGUANAUA-3', that is related to the Nanos Response Element (NRE). Mediates post-transcriptional repression of transcripts via different mechanisms: acts via direct recruitment of the CCR4-POP2-NOT deadenylase leading to translational inhibition and mRNA degradation. Also mediates deadenylation-independent repression by promoting accessibility of miRNAs. Following growth factor stimulation, phosphorylated and binds to the 3'-UTR of CDKN1B/p27 mRNA, inducing a local conformational change that exposes miRNA-binding sites, promoting association of miR-221 and miR-222, efficient suppression of CDKN1B/p27 expression, and rapid entry to the cell cycle. Acts as a post-transcriptional repressor of E2F3 mRNAs by binding to its 3'-UTR and facilitating miRNA regulation. Represses a program of genes necessary to maintain genomic stability such as key mitotic, DNA repair and DNA replication factors. Its ability to repress those target mRNAs is regulated by the lncRNA NORAD (non-coding RNA activated by DNA damage) which, due to its high abundance and multitude of PUMILIO binding sites, is able to sequester a significant fraction of PUM1 and PUM2 in the cytoplasm. Involved in neuronal functions by regulating ATXN1 mRNA levels: acts by binding to the 3'-UTR of ATXN1 transcripts, leading to their down-regulation independently of the miRNA machinery. Plays a role in cytoplasmic sensing of viral infection. In testis, acts as a post-transcriptional regulator of spermatogenesis by binding to the 3'-UTR of mRNAs coding for regulators of p53/TP53. Involved in embryonic stem cell renewal by facilitating the exit from the ground state: acts by targeting mRNAs coding for naive pluripotency transcription factors and accelerates their down-regulation at the onset of differentiation. Binds specifically to miRNA MIR199A precursor, with PUM2, regulates miRNA MIR199A expression at a postranscriptional level. This Homo sapiens (Human) protein is Pumilio homolog 1.